Here is a 150-residue protein sequence, read N- to C-terminus: Galactose-binding lectin (150 aa).

Positions 16 and 19 each coordinate D-galactose. A glycan (N-linked (GlcNAc...) asparagine) is linked at Asn-26. D-galactose-binding positions include Asp-27, 35 to 37 (DIH), His-64, and Gly-67. Asn-74 carries an N-linked (GlcNAc...) asparagine glycan. D-galactose-binding positions include Glu-75, 83–85 (DRH), His-108, and Gly-111. An N-linked (GlcNAc...) asparagine glycan is attached at Asn-118. D-galactose-binding positions include Glu-119 and 127-129 (DKH).

Homodimer. Likely to form large oligomers; oligomerization enhances hemagglutination activity. In terms of processing, glycosylated.

With respect to regulation, hemagglutination activity is not dependent on divalent cations. Hemagglutination activity is highly inhibited by D-galactose and N-acetyl-D-galactosamine, and to a lesser extent by raffinose. Also inhibited by melibiose and alpha-lactose, but not by beta-lactose or D-glucose. D-galactose-binding lectin. Also binds N-acetyl-D-galactosamine. Has hemagglutination activity towards all types of human erythrocytes (O, A and B) and rabbit erythrocytes. Agglutinates Gram-negative and Gram-positive bacteria including E.coli DH5-alpha and L.plantarum ATCC8014, respectively, and has bacteriostatic activity against them. Also agglutinates M.lysodeikticus. May be involved in innate immunity by recognizing and eliminating pathogens. The chain is Galactose-binding lectin from Mytilus californianus (California mussel).